Consider the following 329-residue polypeptide: Holliday junction branch migration complex subunit RuvB (329 aa).

A large ATPase domain (RuvB-L) region spans residues 1 to 180 (MKNILQSTEC…FGIPIHLEFY (180 aa)). ATP contacts are provided by residues Ile-19, Arg-20, Gly-61, Lys-64, Thr-65, Thr-66, 127 to 129 (EDF), Arg-170, Tyr-180, and Arg-217. Residue Thr-65 participates in Mg(2+) binding. The tract at residues 181-252 (STEELIKVIQ…FADKALLRLG (72 aa)) is small ATPAse domain (RuvB-S). The interval 255 to 329 (KLGLDRQDIQ…ISYLKEQSYI (75 aa)) is head domain (RuvB-H). 2 residues coordinate DNA: Arg-308 and Arg-313.

Belongs to the RuvB family. As to quaternary structure, homohexamer. Forms an RuvA(8)-RuvB(12)-Holliday junction (HJ) complex. HJ DNA is sandwiched between 2 RuvA tetramers; dsDNA enters through RuvA and exits via RuvB. An RuvB hexamer assembles on each DNA strand where it exits the tetramer. Each RuvB hexamer is contacted by two RuvA subunits (via domain III) on 2 adjacent RuvB subunits; this complex drives branch migration. In the full resolvosome a probable DNA-RuvA(4)-RuvB(12)-RuvC(2) complex forms which resolves the HJ.

It localises to the cytoplasm. It carries out the reaction ATP + H2O = ADP + phosphate + H(+). Functionally, the RuvA-RuvB-RuvC complex processes Holliday junction (HJ) DNA during genetic recombination and DNA repair, while the RuvA-RuvB complex plays an important role in the rescue of blocked DNA replication forks via replication fork reversal (RFR). RuvA specifically binds to HJ cruciform DNA, conferring on it an open structure. The RuvB hexamer acts as an ATP-dependent pump, pulling dsDNA into and through the RuvAB complex. RuvB forms 2 homohexamers on either side of HJ DNA bound by 1 or 2 RuvA tetramers; 4 subunits per hexamer contact DNA at a time. Coordinated motions by a converter formed by DNA-disengaged RuvB subunits stimulates ATP hydrolysis and nucleotide exchange. Immobilization of the converter enables RuvB to convert the ATP-contained energy into a lever motion, pulling 2 nucleotides of DNA out of the RuvA tetramer per ATP hydrolyzed, thus driving DNA branch migration. The RuvB motors rotate together with the DNA substrate, which together with the progressing nucleotide cycle form the mechanistic basis for DNA recombination by continuous HJ branch migration. Branch migration allows RuvC to scan DNA until it finds its consensus sequence, where it cleaves and resolves cruciform DNA. This is Holliday junction branch migration complex subunit RuvB from Ehrlichia canis (strain Jake).